The following is a 124-amino-acid chain: Protein BEX3 (124 aa).

The segment at methionine 1–leucine 56 is disordered. Residues asparagine 42–alanine 53 show a composition bias toward basic residues. The segment at glutamate 81 to leucine 106 is interaction with p75NTR/NGFR. Residues glutamate 81–proline 124 form an interaction with 14-3-3 epsilon region. Positions isoleucine 90–arginine 100 match the Nuclear export signal motif. The tract at residues histidine 113–histidine 117 is his cluster. Position 121 (cysteine 121) interacts with Zn(2+).

This sequence belongs to the BEX family. As to quaternary structure, self-associates. Binds to the DEATH domain of p75NTR/NGFR. Interacts with 14-3-3 epsilon (YWHAE). Interacts with DIABLO/SMAC. Post-translationally, ubiquitinated. Degraded by the proteasome. As to expression, widely expressed.

Its subcellular location is the nucleus. It localises to the cytoplasm. It is found in the cytosol. In terms of biological role, may be a signaling adapter molecule involved in NGFR/p75NTR-mediated apoptosis induced by NGF. Plays a role in zinc-triggered neuronal death. In absence of reductive stress, acts as a pseudosubstrate for the CRL2(FEM1B) complex: associates with FEM1B via zinc, thereby preventing association between FEM1B and its substrates. This is Protein BEX3 from Mus musculus (Mouse).